Consider the following 1100-residue polypeptide: Exportin-T (1100 aa).

The protein belongs to the exportin family. In terms of assembly, interacts with GSP1, GSP2, NSP1, NUP2 and UTP8.

It localises to the nucleus. It is found in the cytoplasm. TRNA nucleus export receptor which facilitates tRNA translocation across the nuclear pore complex. Preferentially interacts with tRNAs with mature 5'- and 3'-termini and does not distinguish between intron-containing and spliced tRNAs. In the nucleus binds to tRNA and to the Ran-GTPases GSP1 or GSP2 in their active GTP-bound form. Docking of this trimeric complex to the nuclear pore complex (NPC) is mediated through binding to nucleoporins. Upon transit of a nuclear export complex into the cytoplasm, disassembling of the complex and hydrolysis of Ran-GTP to Ran-GDP cause release of the tRNA from the export receptor. The directionality of nuclear export is thought to be conferred by an asymmetric distribution of the GTP- and GDP-bound forms of Ran between the cytoplasm and nucleus. Involved in pre-tRNA splicing, probably by affecting the interaction of pre-tRNA with splicing endonuclease. In Saccharomyces cerevisiae (strain YJM789) (Baker's yeast), this protein is Exportin-T (LOS1).